Consider the following 353-residue polypeptide: MKLSDFDFDLPLELIAQNPISKRDESNLLIASTQQYVKTKFYNIIDYLKEGDLLVFNNSKVIKAKLSLDKNITINLNQRLKDNRRATNDDAGRLKSIDYWSAFAKPARKLKVGDEFYFDNHKIIITEKLEMGEIKIKFELANISVFEFLDKYGEMPLPLYIKRPERQKSDDERYQTVYSNIQGSVAAPTAGLHFTNDIINKLKAKGVQVAFVTLHVGAGTFMPVKTENINEHKMHTEYCSITPETAAIINKAKKEKRRIIAVGTTSLRTLESSGINGNVNSGDFETDIFITPGFKFQIVDMLLTNFHFPKSTLFMLVCAFAGFKKMHELYKYAIEEQMRFFSYGDATLLYRKV.

This sequence belongs to the QueA family. In terms of assembly, monomer.

It localises to the cytoplasm. The catalysed reaction is 7-aminomethyl-7-carbaguanosine(34) in tRNA + S-adenosyl-L-methionine = epoxyqueuosine(34) in tRNA + adenine + L-methionine + 2 H(+). It functions in the pathway tRNA modification; tRNA-queuosine biosynthesis. In terms of biological role, transfers and isomerizes the ribose moiety from AdoMet to the 7-aminomethyl group of 7-deazaguanine (preQ1-tRNA) to give epoxyqueuosine (oQ-tRNA). The sequence is that of S-adenosylmethionine:tRNA ribosyltransferase-isomerase from Rickettsia bellii (strain RML369-C).